A 2389-amino-acid polypeptide reads, in one-letter code: Highly reducing polyketide synthase Dhc3 (2389 aa).

Residues 9–433 (DVPIAVVGLA…GTNGHAVLES (425 aa)) form the Ketosynthase family 3 (KS3) domain. Residues cysteine 181, histidine 316, and histidine 356 each act as for beta-ketoacyl synthase activity in the active site. Positions 551 to 861 (FVFTGQGAQW…LSGPVEQILN (311 aa)) are malonyl-CoA:ACP transacylase (MAT) domain. The active-site For malonyltransferase activity is the serine 641. Residues 944–1079 (RSLIGAQVPM…GLITIDYADT (136 aa)) are N-terminal hotdog fold. In terms of domain architecture, PKS/mFAS DH spans 944–1263 (RSLIGAQVPM…VSELENDTEA (320 aa)). Residues 946–1262 (LIGAQVPMMD…RVSELENDTE (317 aa)) are dehydratase (DH) domain. Catalysis depends on histidine 976, which acts as the Proton acceptor; for dehydratase activity. The segment at 1107 to 1263 (PDICSKEDFY…VSELENDTEA (157 aa)) is C-terminal hotdog fold. Catalysis depends on aspartate 1173, which acts as the Proton donor; for dehydratase activity. Positions 1673–1987 (GLLDTLAFIE…QGKHRGKLVL (315 aa)) are enoylreductase (ER) domain. Residues 2011-2191 (ATYLFVGGLG…VAVDLGIMRD (181 aa)) are catalytic ketoreductase (KRc) domain. Residues 2302 to 2379 (EAVSIITDAL…EFAEKIAEKS (78 aa)) form the Carrier domain. Residue serine 2339 is modified to O-(pantetheine 4'-phosphoryl)serine.

It functions in the pathway mycotoxin biosynthesis. Its function is as follows. Highly reducing polyketide synthase; part of the gene cluster that mediates the biosynthesis of 10,11-dehydrocurvularin, a prevalent fungal phytotoxin with heat shock response and immune-modulatory activities. The highly reducing polyketide synthase Dhc3 is responsible for biosynthesis up to the tetraketide stage. The non-reducing polyketide synthase Dhc5 then conducts four additional chain extension cycles, producing the unreduced part of the nascent octaketide from C-1 to C-8 in 10,11-dehydrocurvularin. The protein is Highly reducing polyketide synthase Dhc3 (Dhc3) of Alternaria cinerariae.